A 406-amino-acid polypeptide reads, in one-letter code: Protein phosphatase 2C (406 aa).

The PPM-type phosphatase domain occupies Arg23 to Phe274. Asp55, Gly56, Asp221, and Asp265 together coordinate Mn(2+).

The protein belongs to the PP2C family. In terms of assembly, monomer. Mg(2+) is required as a cofactor. Requires Mn(2+) as cofactor.

The enzyme catalyses O-phospho-L-seryl-[protein] + H2O = L-seryl-[protein] + phosphate. It carries out the reaction O-phospho-L-threonyl-[protein] + H2O = L-threonyl-[protein] + phosphate. In terms of biological role, enzyme with a broad specificity. The polypeptide is Protein phosphatase 2C (Leishmania chagasi).